A 117-amino-acid chain; its full sequence is Hainantoxin-XV-3 (117 aa).

Positions 1–20 are cleaved as a signal peptide; the sequence is MKLCAVIIASLLVCVAVASS. The disordered stretch occupies residues 20–55; that stretch reads SSDNQKEFAQEKEMTREETQSLGEHEKDDEVTGSEE. The propeptide occupies 21–56; that stretch reads SDNQKEFAQEKEMTREETQSLGEHEKDDEVTGSEER. Over residues 23-55 the composition is skewed to basic and acidic residues; that stretch reads NQKEFAQEKEMTREETQSLGEHEKDDEVTGSEE. 4 disulfide bridges follow: cysteine 58-cysteine 72, cysteine 65-cysteine 78, cysteine 69-cysteine 115, and cysteine 71-cysteine 91.

It belongs to the neurotoxin 03 (Tx2) family. 02 subfamily. HNTX-XV sub-subfamily. Expressed by the venom gland.

The protein resides in the secreted. Putative ion channel inhibitor. The protein is Hainantoxin-XV-3 of Cyriopagopus hainanus (Chinese bird spider).